A 427-amino-acid chain; its full sequence is Tol-Pal system protein TolB (427 aa).

The signal sequence occupies residues 1 to 23; sequence MKLLKRLVSVFAIVLAVGSNAFA.

This sequence belongs to the TolB family. In terms of assembly, the Tol-Pal system is composed of five core proteins: the inner membrane proteins TolA, TolQ and TolR, the periplasmic protein TolB and the outer membrane protein Pal. They form a network linking the inner and outer membranes and the peptidoglycan layer.

It is found in the periplasm. Part of the Tol-Pal system, which plays a role in outer membrane invagination during cell division and is important for maintaining outer membrane integrity. In Haemophilus influenzae (strain PittEE), this protein is Tol-Pal system protein TolB.